A 176-amino-acid chain; its full sequence is Ribosome maturation factor RimM (176 aa).

A PRC barrel domain is found at 100 to 173 (KDEYHYHDLI…WLLINPPPGL (74 aa)).

It belongs to the RimM family. As to quaternary structure, binds ribosomal protein uS19.

The protein resides in the cytoplasm. Its function is as follows. An accessory protein needed during the final step in the assembly of 30S ribosomal subunit, possibly for assembly of the head region. Essential for efficient processing of 16S rRNA. May be needed both before and after RbfA during the maturation of 16S rRNA. It has affinity for free ribosomal 30S subunits but not for 70S ribosomes. This is Ribosome maturation factor RimM from Prochlorococcus marinus (strain NATL1A).